Reading from the N-terminus, the 391-residue chain is Toluene efflux pump periplasmic linker protein TtgG (391 aa).

The signal sequence occupies residues Met1 to Gly32. The N-palmitoyl cysteine moiety is linked to residue Cys33. A lipid anchor (S-diacylglycerol cysteine) is attached at Cys33. Positions Arg107–Thr136 form a coiled coil.

It belongs to the membrane fusion protein (MFP) (TC 8.A.1) family.

Its subcellular location is the cell inner membrane. In terms of biological role, the periplasmic linker component of an organic solvent efflux pump. Involved in export of a number of organic solvents, including toluene and styrene. This is the most important solvent efflux pump in this strain, although it can export AMP and some antibiotics. This is Toluene efflux pump periplasmic linker protein TtgG (ttgG) from Pseudomonas putida (strain DOT-T1E).